A 234-amino-acid chain; its full sequence is Small ribosomal subunit protein uS2c (234 aa).

Belongs to the universal ribosomal protein uS2 family.

It is found in the plastid. Its subcellular location is the chloroplast. In Pinus thunbergii (Japanese black pine), this protein is Small ribosomal subunit protein uS2c (rps2).